The following is a 241-amino-acid chain: Methylthioribulose-1-phosphate dehydratase (241 aa).

Cys96 contributes to the substrate binding site. Residues His114 and His116 each contribute to the Zn(2+) site. Residue Glu138 is the Proton donor/acceptor of the active site. His194 lines the Zn(2+) pocket.

This sequence belongs to the aldolase class II family. MtnB subfamily. In terms of assembly, homotetramer. Interacts with APAF1. May interact with CASP1. Zn(2+) is required as a cofactor. In terms of tissue distribution, expressed in skeletal muscle (at protein level).

The protein resides in the cytoplasm. The enzyme catalyses 5-(methylsulfanyl)-D-ribulose 1-phosphate = 5-methylsulfanyl-2,3-dioxopentyl phosphate + H2O. Its pathway is amino-acid biosynthesis; L-methionine biosynthesis via salvage pathway; L-methionine from S-methyl-5-thio-alpha-D-ribose 1-phosphate: step 2/6. Its function is as follows. Catalyzes the dehydration of methylthioribulose-1-phosphate (MTRu-1-P) into 2,3-diketo-5-methylthiopentyl-1-phosphate (DK-MTP-1-P). Functions in the methionine salvage pathway, which plays a key role in cancer, apoptosis, microbial proliferation and inflammation. May inhibit the CASP1-related inflammatory response (pyroptosis), the CASP9-dependent apoptotic pathway and the cytochrome c-dependent and APAF1-mediated cell death. This is Methylthioribulose-1-phosphate dehydratase from Mus musculus (Mouse).